Reading from the N-terminus, the 172-residue chain is Centrin-1 (172 aa).

Residues 1–31 are disordered; it reads MASGFKKPSAASTGQKRKVAPKPELTEDQKQ. EF-hand domains follow at residues 28–63, 64–99, 101–136, and 137–172; these read DQKQ…LGFE, PRKE…KMSE, DTKE…LGEN, and LTDE…TSLY. Ca(2+) contacts are provided by aspartate 41, aspartate 43, serine 45, threonine 47, and glutamate 52. Residues aspartate 150, aspartate 152, aspartate 154, glutamate 156, and glutamate 161 each coordinate Ca(2+).

It belongs to the centrin family. As to quaternary structure, monomer. Interacts with CIMAP3. Interacts with USP49.

The protein localises to the cytoplasm. It is found in the cytoskeleton. It localises to the microtubule organizing center. Its subcellular location is the centrosome. The protein resides in the cell projection. The protein localises to the cilium. Plays a fundamental role in microtubule-organizing center structure and function. Plays a role in sperm cilia formation. The protein is Centrin-1 of Homo sapiens (Human).